The sequence spans 219 residues: MFDANCLKLMFVAGSQDFYHIKGGKNDRINALLDALELALQSKITAFQFRQKGDLALQDPIEIKQLALECQKLCQKYGAPFIVNDEVQLALELKADGVHVGQEDMAIEEVMALCKKRLFIGLSVNTLEQALKVRHLDGVAYFGVGPIFPTQSKKDKQVVGVELLKKIKDSGIKKPLIAIGGITAHNASKLREYGGIAVISAITQAKDKALAVGKLLKNA.

Residues 48–52 and asparagine 84 each bind 4-amino-2-methyl-5-(diphosphooxymethyl)pyrimidine; that span reads QFRQK. Mg(2+)-binding residues include aspartate 85 and aspartate 104. Serine 123 lines the 4-amino-2-methyl-5-(diphosphooxymethyl)pyrimidine pocket. 150–152 lines the 2-[(2R,5Z)-2-carboxy-4-methylthiazol-5(2H)-ylidene]ethyl phosphate pocket; sequence TQS. Residue lysine 153 participates in 4-amino-2-methyl-5-(diphosphooxymethyl)pyrimidine binding. 2-[(2R,5Z)-2-carboxy-4-methylthiazol-5(2H)-ylidene]ethyl phosphate contacts are provided by residues glycine 181 and 199-200; that span reads IS.

The protein belongs to the thiamine-phosphate synthase family. The cofactor is Mg(2+).

The catalysed reaction is 2-[(2R,5Z)-2-carboxy-4-methylthiazol-5(2H)-ylidene]ethyl phosphate + 4-amino-2-methyl-5-(diphosphooxymethyl)pyrimidine + 2 H(+) = thiamine phosphate + CO2 + diphosphate. It carries out the reaction 2-(2-carboxy-4-methylthiazol-5-yl)ethyl phosphate + 4-amino-2-methyl-5-(diphosphooxymethyl)pyrimidine + 2 H(+) = thiamine phosphate + CO2 + diphosphate. It catalyses the reaction 4-methyl-5-(2-phosphooxyethyl)-thiazole + 4-amino-2-methyl-5-(diphosphooxymethyl)pyrimidine + H(+) = thiamine phosphate + diphosphate. It functions in the pathway cofactor biosynthesis; thiamine diphosphate biosynthesis; thiamine phosphate from 4-amino-2-methyl-5-diphosphomethylpyrimidine and 4-methyl-5-(2-phosphoethyl)-thiazole: step 1/1. Functionally, condenses 4-methyl-5-(beta-hydroxyethyl)thiazole monophosphate (THZ-P) and 2-methyl-4-amino-5-hydroxymethyl pyrimidine pyrophosphate (HMP-PP) to form thiamine monophosphate (TMP). In Helicobacter pylori (strain Shi470), this protein is Thiamine-phosphate synthase.